We begin with the raw amino-acid sequence, 451 residues long: Trigger factor (451 aa).

One can recognise a PPIase FKBP-type domain in the interval 163-248; sequence GDIIDMEYTV…IKALYANILP (86 aa).

Belongs to the FKBP-type PPIase family. Tig subfamily.

Its subcellular location is the cytoplasm. It catalyses the reaction [protein]-peptidylproline (omega=180) = [protein]-peptidylproline (omega=0). Functionally, involved in protein export. Acts as a chaperone by maintaining the newly synthesized protein in an open conformation. Functions as a peptidyl-prolyl cis-trans isomerase. This chain is Trigger factor, found in Leptospira interrogans serogroup Icterohaemorrhagiae serovar copenhageni (strain Fiocruz L1-130).